The chain runs to 1141 residues: Membrane-associated protein gex-3 (1141 aa).

The protein belongs to the HEM-1/HEM-2 family. Interacts with aco-1, gei-13 and gex-2. Interacts with gex-3. Expressed in neurons.

It is found in the cytoplasm. In terms of biological role, rac effector required for tissue morphogenesis, cell migrations and egg laying. May play a role in egg laying and in yolk protein clatherin-mediated endocytosis by oocytes during oogenesis. Plays a role in the formation of gap junctions between EA and EP endodermal precursor cells in embryos. This Caenorhabditis elegans protein is Membrane-associated protein gex-3.